A 254-amino-acid polypeptide reads, in one-letter code: Leucyl/phenylalanyl-tRNA--protein transferase (254 aa).

Over residues 1–10 the composition is skewed to pro residues; sequence MSSQPPPLPW. A disordered region spans residues 1–28; it reads MSSQPPPLPWLDPNQDFPPTSQAWDENS.

The protein belongs to the L/F-transferase family.

It is found in the cytoplasm. It carries out the reaction N-terminal L-lysyl-[protein] + L-leucyl-tRNA(Leu) = N-terminal L-leucyl-L-lysyl-[protein] + tRNA(Leu) + H(+). The enzyme catalyses N-terminal L-arginyl-[protein] + L-leucyl-tRNA(Leu) = N-terminal L-leucyl-L-arginyl-[protein] + tRNA(Leu) + H(+). It catalyses the reaction L-phenylalanyl-tRNA(Phe) + an N-terminal L-alpha-aminoacyl-[protein] = an N-terminal L-phenylalanyl-L-alpha-aminoacyl-[protein] + tRNA(Phe). Functions in the N-end rule pathway of protein degradation where it conjugates Leu, Phe and, less efficiently, Met from aminoacyl-tRNAs to the N-termini of proteins containing an N-terminal arginine or lysine. The chain is Leucyl/phenylalanyl-tRNA--protein transferase from Albidiferax ferrireducens (strain ATCC BAA-621 / DSM 15236 / T118) (Rhodoferax ferrireducens).